The sequence spans 496 residues: Docking protein 3 (496 aa).

Residues 18 to 38 form a disordered region; that stretch reads LSLDGGTGSGQKGKCEEFPSS. In terms of domain architecture, PH spans 63–179; it reads PIKDGILYQQ…WMGPICQLAF (117 aa). Position 194 is a phosphoserine (Ser194). The region spanning 213–317 is the IRS-type PTB domain; that stretch reads EVGEFPVVVQ…ARQRERLPEL (105 aa). Residues 313–363 are disordered; sequence RLPELTRPQPCPLPRATSLPSLDTPGELREMPPGPEPPTSRKMHLAEPGPQ. 2 positions are modified to phosphoserine: Ser330 and Ser364. At Tyr381 the chain carries Phosphotyrosine. The interval 408–447 is disordered; sequence PTLHGGEPEPHEGPGSRSPTTSPIYHNGQDLSWPGPANDS. Residue Ser425 is modified to Phosphoserine.

Belongs to the DOK family. Type A subfamily. On tyrosine phosphorylation, interacts with CSK and INPP5D/SHIP1 via their SH2 domains. Both Tyr-381 and Tyr-398 are required for interaction with INPP5D. Only Tyr-381 is required for interaction with CSK. Binds ABL1 through the PTB domain and in a kinase-dependent manner. Does not interact with RasGAP. In terms of processing, constitutively tyrosine-phosphorylated. Post-translationally, on IL2 stimulation, phosphorylated on C-terminal tyrosine residues possibly by Src kinases. Can also be phosphorylated by ABL1 kinase. Expressed in spleen.

The protein resides in the cytoplasm. It is found in the cell membrane. Its function is as follows. DOK proteins are enzymatically inert adaptor or scaffolding proteins. They provide a docking platform for the assembly of multimolecular signaling complexes. DOK3 is a negative regulator of JNK signaling in B-cells through interaction with INPP5D/SHIP1. May modulate ABL1 function. The polypeptide is Docking protein 3 (DOK3) (Homo sapiens (Human)).